An 88-amino-acid chain; its full sequence is UPF0297 protein LAR_0520 (88 aa).

It belongs to the UPF0297 family.

In Limosilactobacillus reuteri subsp. reuteri (strain JCM 1112) (Lactobacillus reuteri), this protein is UPF0297 protein LAR_0520.